A 200-amino-acid chain; its full sequence is Small ribosomal subunit protein eS8B (200 aa).

The tract at residues 1 to 41 (MGITRDSRHKRSATGAKRAQYRKKRKFELGRQPSNTRIGPK) is disordered. Serine 62 and serine 99 each carry phosphoserine. A disordered region spans residues 124–145 (KGKKATATPTPKSKHVQRKHSA). Basic residues predominate over residues 135–145 (KSKHVQRKHSA). Phosphoserine occurs at positions 150, 154, and 171.

This sequence belongs to the eukaryotic ribosomal protein eS8 family. In terms of assembly, component of the small ribosomal subunit (SSU). Mature yeast ribosomes consist of a small (40S) and a large (60S) subunit. The 40S small subunit contains 1 molecule of ribosomal RNA (18S rRNA) and at least 33 different proteins. The large 60S subunit contains 3 rRNA molecules (25S, 5.8S and 5S rRNA) and at least 46 different proteins.

Its subcellular location is the cytoplasm. In terms of biological role, component of the ribosome, a large ribonucleoprotein complex responsible for the synthesis of proteins in the cell. The small ribosomal subunit (SSU) binds messenger RNAs (mRNAs) and translates the encoded message by selecting cognate aminoacyl-transfer RNA (tRNA) molecules. The large subunit (LSU) contains the ribosomal catalytic site termed the peptidyl transferase center (PTC), which catalyzes the formation of peptide bonds, thereby polymerizing the amino acids delivered by tRNAs into a polypeptide chain. The nascent polypeptides leave the ribosome through a tunnel in the LSU and interact with protein factors that function in enzymatic processing, targeting, and the membrane insertion of nascent chains at the exit of the ribosomal tunnel. The polypeptide is Small ribosomal subunit protein eS8B (rps802) (Schizosaccharomyces pombe (strain 972 / ATCC 24843) (Fission yeast)).